The following is a 509-amino-acid chain: Cobyric acid synthase (509 aa).

Positions 262–459 (EIKVGIIKLP…IHGIFENDSW (198 aa)) constitute a GATase cobBQ-type domain. The active-site Nucleophile is the cysteine 343. Histidine 451 is an active-site residue.

Belongs to the CobB/CobQ family. CobQ subfamily.

The protein operates within cofactor biosynthesis; adenosylcobalamin biosynthesis. In terms of biological role, catalyzes amidations at positions B, D, E, and G on adenosylcobyrinic A,C-diamide. NH(2) groups are provided by glutamine, and one molecule of ATP is hydrogenolyzed for each amidation. The sequence is that of Cobyric acid synthase from Prochlorococcus marinus (strain MIT 9301).